The primary structure comprises 758 residues: Amyloid beta precursor protein binding family B member 2 (758 aa).

Ser123 is subject to Phosphoserine. The segment at 134 to 154 is disordered; that stretch reads KLEGKEPHPQDSSSCEILPSQ. The residue at position 160 (Ser160) is a Phosphoserine. Basic and acidic residues predominate over residues 176–190; it reads EQNRGNHHGTAEEKS. Disordered stretches follow at residues 176–195, 206–295, and 326–351; these read EQNR…PVQG, LLLQ…LPPG, and DLQG…KQPW. Composition is skewed to polar residues over residues 212–230 and 261–275; these read NRPQ…SSSP and SWTT…PSSP. A WW domain is found at 290-322; sequence PDLPPGWKRVSDIAGTYYWHIPTGTTQWERPVS. Positions 331–340 are enriched in polar residues; the sequence is RKGSLSSVTP. Phosphoserine is present on residues Ser334, Ser409, and Ser412. PID domains follow at residues 413-578 and 584-736; these read DPEA…LQVD and TELV…VTTN.

As to quaternary structure, interacts (via C-terminus) with APP (via C-terminus). Interacts with APLP2 (via cytoplasmic domain). As to expression, widely expressed.

It is found in the endoplasmic reticulum. The protein localises to the golgi apparatus. It localises to the early endosome. In terms of biological role, plays a role in the maintenance of lens transparency, and may also play a role in muscle cell strength. Involved in hippocampal neurite branching and neuromuscular junction formation, as a result plays a role in spatial memory functioning. Activates transcription of APP. The protein is Amyloid beta precursor protein binding family B member 2 of Homo sapiens (Human).